Consider the following 284-residue polypeptide: RNase adapter protein RapZ (284 aa).

Position 8-15 (8-15) interacts with ATP; it reads GRSGSGKS. 56–59 contributes to the GTP binding site; the sequence is DVRN. The RNA-binding stretch occupies residues 266–284; it reads RSRGKNVQSRHRTLEKRKQ.

The protein belongs to the RapZ-like family. RapZ subfamily. Homotrimer.

Its function is as follows. Modulates the synthesis of GlmS, by affecting the processing and stability of the regulatory small RNA GlmZ. When glucosamine-6-phosphate (GlcN6P) concentrations are high in the cell, RapZ binds GlmZ and targets it to cleavage by RNase E. Consequently, GlmZ is inactivated and unable to activate GlmS synthesis. Under low GlcN6P concentrations, RapZ is sequestered and inactivated by an other regulatory small RNA, GlmY, preventing GlmZ degradation and leading to synthesis of GlmS. The polypeptide is RNase adapter protein RapZ (Serratia proteamaculans (strain 568)).